The chain runs to 417 residues: MMPTQRLAEADPQIAKLIREETRRQAEGLELIASENFVSPAVLEALGSTLTNKYAEGYPGKRYYGGCEVVDQVEQLAIDRAKQLFGADHANVQPHAGSQANMAAYFALAKPGDTVLAMSLNFGGHLTHGSPVNFSGKLFKIVPYGLRQSDETIDMDEVARLAREHRPRILMVGASAYSRTLHFDRFAEIANEVGAAMVVDMAHIAGLVAAGLHPSPVPHSEIVTTTTHKTLRGPRGGMILCREAHAKTLNSQIFPGIQGGPLEHVIAAKAVAFGEALRPEFKEYQRRIVENAQVLAEGLKSAGLRLVSGGTDNHLMLVDLRPKKLTGKVAEEALGKAGITVNKNMIPWDPEKPMTTSGIRVGTPALSTRGMGPREMTLVAALIGRVLDAPADEQVLARVRGEVKDLCAHFPMYADRV.

(6S)-5,6,7,8-tetrahydrofolate-binding positions include Leu-120 and 124-126 (GHL). Lys-229 carries the N6-(pyridoxal phosphate)lysine modification.

It belongs to the SHMT family. In terms of assembly, homodimer. Pyridoxal 5'-phosphate serves as cofactor.

The protein localises to the cytoplasm. The enzyme catalyses (6R)-5,10-methylene-5,6,7,8-tetrahydrofolate + glycine + H2O = (6S)-5,6,7,8-tetrahydrofolate + L-serine. It participates in one-carbon metabolism; tetrahydrofolate interconversion. The protein operates within amino-acid biosynthesis; glycine biosynthesis; glycine from L-serine: step 1/1. Functionally, catalyzes the reversible interconversion of serine and glycine with tetrahydrofolate (THF) serving as the one-carbon carrier. This reaction serves as the major source of one-carbon groups required for the biosynthesis of purines, thymidylate, methionine, and other important biomolecules. Also exhibits THF-independent aldolase activity toward beta-hydroxyamino acids, producing glycine and aldehydes, via a retro-aldol mechanism. This is Serine hydroxymethyltransferase from Anaeromyxobacter dehalogenans (strain 2CP-C).